Here is a 198-residue protein sequence, read N- to C-terminus: FMN-dependent NADH:quinone oxidoreductase (198 aa).

FMN contacts are provided by residues Ser-10, 16 to 18, 94 to 97, and 138 to 141; these read SQS, MYNF, and TRGG.

The protein belongs to the azoreductase type 1 family. In terms of assembly, homodimer. It depends on FMN as a cofactor.

It carries out the reaction 2 a quinone + NADH + H(+) = 2 a 1,4-benzosemiquinone + NAD(+). The enzyme catalyses N,N-dimethyl-1,4-phenylenediamine + anthranilate + 2 NAD(+) = 2-(4-dimethylaminophenyl)diazenylbenzoate + 2 NADH + 2 H(+). Its function is as follows. Quinone reductase that provides resistance to thiol-specific stress caused by electrophilic quinones. Functionally, also exhibits azoreductase activity. Catalyzes the reductive cleavage of the azo bond in aromatic azo compounds to the corresponding amines. In Shewanella oneidensis (strain ATCC 700550 / JCM 31522 / CIP 106686 / LMG 19005 / NCIMB 14063 / MR-1), this protein is FMN-dependent NADH:quinone oxidoreductase.